Here is a 286-residue protein sequence, read N- to C-terminus: ATP synthase gamma chain (286 aa).

The protein belongs to the ATPase gamma chain family. As to quaternary structure, F-type ATPases have 2 components, CF(1) - the catalytic core - and CF(0) - the membrane proton channel. CF(1) has five subunits: alpha(3), beta(3), gamma(1), delta(1), epsilon(1). CF(0) has three main subunits: a, b and c.

It localises to the cell inner membrane. Functionally, produces ATP from ADP in the presence of a proton gradient across the membrane. The gamma chain is believed to be important in regulating ATPase activity and the flow of protons through the CF(0) complex. In Teredinibacter turnerae (strain ATCC 39867 / T7901), this protein is ATP synthase gamma chain.